The chain runs to 299 residues: tRNA pseudouridine synthase B (299 aa).

Aspartate 49 serves as the catalytic Nucleophile. The PUA domain maps to 241 to 299 (MPRVTVSGRAAARVLHGVAPAVRVEHPDGTTVAVVAANGALLALAEADGGGLRLRKVFG).

The protein belongs to the pseudouridine synthase TruB family. Type 1 subfamily.

It carries out the reaction uridine(55) in tRNA = pseudouridine(55) in tRNA. Functionally, responsible for synthesis of pseudouridine from uracil-55 in the psi GC loop of transfer RNAs. This chain is tRNA pseudouridine synthase B, found in Symbiobacterium thermophilum (strain DSM 24528 / JCM 14929 / IAM 14863 / T).